A 223-amino-acid chain; its full sequence is 2-C-methyl-D-erythritol 4-phosphate cytidylyltransferase (223 aa).

It belongs to the IspD/TarI cytidylyltransferase family. IspD subfamily.

The catalysed reaction is 2-C-methyl-D-erythritol 4-phosphate + CTP + H(+) = 4-CDP-2-C-methyl-D-erythritol + diphosphate. It functions in the pathway isoprenoid biosynthesis; isopentenyl diphosphate biosynthesis via DXP pathway; isopentenyl diphosphate from 1-deoxy-D-xylulose 5-phosphate: step 2/6. Catalyzes the formation of 4-diphosphocytidyl-2-C-methyl-D-erythritol from CTP and 2-C-methyl-D-erythritol 4-phosphate (MEP). The chain is 2-C-methyl-D-erythritol 4-phosphate cytidylyltransferase from Prochlorococcus marinus (strain MIT 9301).